A 336-amino-acid polypeptide reads, in one-letter code: Phytochrome A-associated F-box protein (336 aa).

The F-box domain maps to Glu-3–Ile-55. Residues Arg-197 to Lys-201 carry the Nuclear localization signal motif.

Probable component of an E3 ubiquitin ligase SCF complex. Interacts with SKP1A/ASK1 and SKP1B/ASK2.

The protein localises to the nucleus. It participates in protein modification; protein ubiquitination. Component of SCF(ASK-cullin-F-box) E3 ubiquitin ligase complexes, which may mediate the ubiquitination and subsequent proteasomal degradation of target proteins. Negative regulator of the phyA signaling pathway that shifts the responsiveness of the phyA signaling system associated with hypocotyl elongation from red to far-red wavelength. The chain is Phytochrome A-associated F-box protein (EID1) from Arabidopsis thaliana (Mouse-ear cress).